Here is a 192-residue protein sequence, read N- to C-terminus: Peptide deformylase (192 aa).

2 residues coordinate Fe cation: C108 and H150. E151 is an active-site residue. A Fe cation-binding site is contributed by H154.

This sequence belongs to the polypeptide deformylase family. Fe(2+) is required as a cofactor.

The catalysed reaction is N-terminal N-formyl-L-methionyl-[peptide] + H2O = N-terminal L-methionyl-[peptide] + formate. Functionally, removes the formyl group from the N-terminal Met of newly synthesized proteins. Requires at least a dipeptide for an efficient rate of reaction. N-terminal L-methionine is a prerequisite for activity but the enzyme has broad specificity at other positions. The protein is Peptide deformylase of Opitutus terrae (strain DSM 11246 / JCM 15787 / PB90-1).